We begin with the raw amino-acid sequence, 428 residues long: Adenylosuccinate synthetase, chloroplastic (428 aa).

Residues 17 to 23 and 45 to 47 each bind GTP; these read GDEGKGK and GHT. The active-site Proton acceptor is the aspartate 18. 2 residues coordinate Mg(2+): aspartate 18 and glycine 45. IMP contacts are provided by residues 18 to 21, 43 to 46, threonine 135, arginine 149, asparagine 226, threonine 241, and arginine 305; these read DEGK and NAGH. The active-site Proton donor is the histidine 46. Substrate is bound at residue 301–307; the sequence is TTTGRPR. GTP-binding positions include arginine 307, 333-335, and 416-418; these read KLD and GVG.

This sequence belongs to the adenylosuccinate synthetase family. As to quaternary structure, homodimer. The cofactor is Mg(2+).

It localises to the plastid. The protein resides in the chloroplast. It carries out the reaction IMP + L-aspartate + GTP = N(6)-(1,2-dicarboxyethyl)-AMP + GDP + phosphate + 2 H(+). It functions in the pathway purine metabolism; AMP biosynthesis via de novo pathway; AMP from IMP: step 1/2. Functionally, plays an important role in the de novo pathway and in the salvage pathway of purine nucleotide biosynthesis. Catalyzes the first committed step in the biosynthesis of AMP from IMP. In Ostreococcus lucimarinus (strain CCE9901), this protein is Adenylosuccinate synthetase, chloroplastic.